We begin with the raw amino-acid sequence, 246 residues long: Probable transcriptional regulatory protein CGSHiEE_01480 (246 aa).

Belongs to the TACO1 family.

It is found in the cytoplasm. This chain is Probable transcriptional regulatory protein CGSHiEE_01480, found in Haemophilus influenzae (strain PittEE).